The following is a 109-amino-acid chain: MSAQPVDIQIFGRSLRVNCPPDQRDALNQAADDLNQRLQDLKERTRVTNTEQLVFIAALNISYELAQEKAKTRDYAASMEQRIRMLQQTIEQALLERGRITEKTNQNFE.

A coiled-coil region spans residues 21–100; that stretch reads PDQRDALNQA…EQALLERGRI (80 aa).

It belongs to the ZapA family. Type 1 subfamily. In terms of assembly, homodimer. Interacts with FtsZ.

It is found in the cytoplasm. Activator of cell division through the inhibition of FtsZ GTPase activity, therefore promoting FtsZ assembly into bundles of protofilaments necessary for the formation of the division Z ring. It is recruited early at mid-cell but it is not essential for cell division. In Shigella dysenteriae serotype 1 (strain Sd197), this protein is Cell division protein ZapA.